We begin with the raw amino-acid sequence, 375 residues long: Stimulator of interferon genes protein 2 (375 aa).

The next 4 helical transmembrane spans lie at 30–50, 60–80, 114–134, and 144–164; these read TATV…LLAV, IHFL…GELV, AGSI…VLYE, and YPIL…LVGL. Residues Tyr195, Arg256, and Arg262 each contribute to the 2',3'-cGAMP site.

The protein belongs to the STING family.

It localises to the membrane. In terms of biological role, facilitator of innate immune signaling that acts as a sensor of second messenger signals produced by cyclic GMP-AMP synthase-like receptors (cGLRs) and promotes the production of type I interferon. Innate immune response is triggered in response to nucleotides from viruses and bacteria delivered to the cytoplasm. Acts by binding cyclic dinucleotides: recognizes and binds 2'-3' linked cGAMP (2'-3'-cGAMP), a second messengers produced by cGLRs in response to nucleotides in the cytosol, such as double-stranded RNA (dsRNA). Upon binding to 2'-3'-cGAMP, oligomerizes and promotes the recruitment and subsequent activation of the transcription factor IRF3 to induce expression of type I interferon. In Stylophora pistillata (Smooth cauliflower coral), this protein is Stimulator of interferon genes protein 2.